We begin with the raw amino-acid sequence, 301 residues long: ATP synthase gamma chain (301 aa).

It belongs to the ATPase gamma chain family. F-type ATPases have 2 components, CF(1) - the catalytic core - and CF(0) - the membrane proton channel. CF(1) has five subunits: alpha(3), beta(3), gamma(1), delta(1), epsilon(1). CF(0) has three main subunits: a, b and c.

It localises to the cell inner membrane. Its function is as follows. Produces ATP from ADP in the presence of a proton gradient across the membrane. The gamma chain is believed to be important in regulating ATPase activity and the flow of protons through the CF(0) complex. This chain is ATP synthase gamma chain, found in Helicobacter pylori (strain G27).